Here is a 156-residue protein sequence, read N- to C-terminus: MKARLIATGERAPSWVAQGFAEYQKRLSHWLPFELVEIEPGLRGKGRDARRATEDEGRRVIAALPKNAYVVALDVPGRQLSSEQLAQRLEHWRGQGRDLAFLIGGPEGHSPEVSALADEKWSIGPLTLPHMLVRLVVAEQLYRAAAMIANHPYHRA.

S-adenosyl-L-methionine-binding positions include Leu-73, Gly-104, and 123–128 (IGPLTL).

It belongs to the RNA methyltransferase RlmH family. In terms of assembly, homodimer.

The protein resides in the cytoplasm. It catalyses the reaction pseudouridine(1915) in 23S rRNA + S-adenosyl-L-methionine = N(3)-methylpseudouridine(1915) in 23S rRNA + S-adenosyl-L-homocysteine + H(+). Functionally, specifically methylates the pseudouridine at position 1915 (m3Psi1915) in 23S rRNA. The sequence is that of Ribosomal RNA large subunit methyltransferase H from Stenotrophomonas maltophilia (strain K279a).